The sequence spans 184 residues: Protein GrpE (184 aa).

This sequence belongs to the GrpE family. As to quaternary structure, homodimer.

The protein resides in the cytoplasm. In terms of biological role, participates actively in the response to hyperosmotic and heat shock by preventing the aggregation of stress-denatured proteins, in association with DnaK and GrpE. It is the nucleotide exchange factor for DnaK and may function as a thermosensor. Unfolded proteins bind initially to DnaJ; upon interaction with the DnaJ-bound protein, DnaK hydrolyzes its bound ATP, resulting in the formation of a stable complex. GrpE releases ADP from DnaK; ATP binding to DnaK triggers the release of the substrate protein, thus completing the reaction cycle. Several rounds of ATP-dependent interactions between DnaJ, DnaK and GrpE are required for fully efficient folding. This is Protein GrpE from Pseudomonas putida (strain GB-1).